We begin with the raw amino-acid sequence, 325 residues long: Beta-ketoacyl-[acyl-carrier-protein] synthase III (325 aa).

Active-site residues include Cys119 and His252. Residues 253 to 257 are ACP-binding; sequence QANIR. Asn282 is an active-site residue.

This sequence belongs to the thiolase-like superfamily. FabH family. Homodimer.

The protein localises to the cytoplasm. It catalyses the reaction malonyl-[ACP] + acetyl-CoA + H(+) = 3-oxobutanoyl-[ACP] + CO2 + CoA. The protein operates within lipid metabolism; fatty acid biosynthesis. Catalyzes the condensation reaction of fatty acid synthesis by the addition to an acyl acceptor of two carbons from malonyl-ACP. Catalyzes the first condensation reaction which initiates fatty acid synthesis and may therefore play a role in governing the total rate of fatty acid production. Possesses both acetoacetyl-ACP synthase and acetyl transacylase activities. Its substrate specificity determines the biosynthesis of branched-chain and/or straight-chain of fatty acids. The protein is Beta-ketoacyl-[acyl-carrier-protein] synthase III of Delftia acidovorans (strain DSM 14801 / SPH-1).